Reading from the N-terminus, the 432-residue chain is Glutamate-1-semialdehyde 2,1-aminomutase (432 aa).

Lysine 272 is modified (N6-(pyridoxal phosphate)lysine).

It belongs to the class-III pyridoxal-phosphate-dependent aminotransferase family. HemL subfamily. As to quaternary structure, homodimer. Pyridoxal 5'-phosphate serves as cofactor.

Its subcellular location is the cytoplasm. The enzyme catalyses (S)-4-amino-5-oxopentanoate = 5-aminolevulinate. It functions in the pathway porphyrin-containing compound metabolism; protoporphyrin-IX biosynthesis; 5-aminolevulinate from L-glutamyl-tRNA(Glu): step 2/2. It participates in porphyrin-containing compound metabolism; chlorophyll biosynthesis. The chain is Glutamate-1-semialdehyde 2,1-aminomutase from Trichormus variabilis (strain ATCC 29413 / PCC 7937) (Anabaena variabilis).